A 418-amino-acid polypeptide reads, in one-letter code: Acetylornithine aminotransferase (418 aa).

Pyridoxal 5'-phosphate is bound by residues 116–117 (GA) and Phe149. Arg152 serves as a coordination point for N(2)-acetyl-L-ornithine. 240 to 243 (DEVQ) is a binding site for pyridoxal 5'-phosphate. Lys269 carries the post-translational modification N6-(pyridoxal phosphate)lysine. Ser296 is a N(2)-acetyl-L-ornithine binding site. Thr297 lines the pyridoxal 5'-phosphate pocket.

It belongs to the class-III pyridoxal-phosphate-dependent aminotransferase family. ArgD subfamily. Homodimer. The cofactor is pyridoxal 5'-phosphate.

The protein resides in the cytoplasm. The enzyme catalyses N(2)-acetyl-L-ornithine + 2-oxoglutarate = N-acetyl-L-glutamate 5-semialdehyde + L-glutamate. The protein operates within amino-acid biosynthesis; L-arginine biosynthesis; N(2)-acetyl-L-ornithine from L-glutamate: step 4/4. In Prochlorococcus marinus (strain MIT 9313), this protein is Acetylornithine aminotransferase.